Here is a 284-residue protein sequence, read N- to C-terminus: MKQKVVNIGDIKVANDLPFVLFGGMNVLESRDLAMRICEHYVTVTQKLGIPYVFKASFDKANRSSIHSYRGPGLEEGMKIFQELKQTFGVKVITDVHEASQAQPVADVVDVIQLPAFLARQTDLVEAMAKTGAVINVKKPQFVSPGQMGNIVDKFHEGGNDKVILCDRGANFGYDNLVVDMLGFSVMKKVSGNSPVIFDVTHALQCRDPFGAASGGRRGQVTELARAGMAVGLAGLFLESHPDPANAKCDGPSALPLAKLEQFLTQIKAIDDLVKSFDELDTEN.

The protein belongs to the KdsA family.

It localises to the cytoplasm. The catalysed reaction is D-arabinose 5-phosphate + phosphoenolpyruvate + H2O = 3-deoxy-alpha-D-manno-2-octulosonate-8-phosphate + phosphate. The protein operates within carbohydrate biosynthesis; 3-deoxy-D-manno-octulosonate biosynthesis; 3-deoxy-D-manno-octulosonate from D-ribulose 5-phosphate: step 2/3. Its pathway is bacterial outer membrane biogenesis; lipopolysaccharide biosynthesis. This is 2-dehydro-3-deoxyphosphooctonate aldolase from Salmonella enteritidis PT4 (strain P125109).